The primary structure comprises 467 residues: Glutamate--tRNA ligase (467 aa).

A 'HIGH' region motif is present at residues 9 to 19; it reads PSPTGYLHIGG. The short motif at 237–241 is the 'KMSKS' region element; it reads KLSKR. K240 is a binding site for ATP.

Belongs to the class-I aminoacyl-tRNA synthetase family. Glutamate--tRNA ligase type 1 subfamily. As to quaternary structure, monomer.

The protein localises to the cytoplasm. It carries out the reaction tRNA(Glu) + L-glutamate + ATP = L-glutamyl-tRNA(Glu) + AMP + diphosphate. Functionally, catalyzes the attachment of glutamate to tRNA(Glu) in a two-step reaction: glutamate is first activated by ATP to form Glu-AMP and then transferred to the acceptor end of tRNA(Glu). This chain is Glutamate--tRNA ligase, found in Xylella fastidiosa (strain M23).